Here is a 270-residue protein sequence, read N- to C-terminus: 4-hydroxy-4-methyl-2-oxoglutarate aldolase tasA (270 aa).

The Proton acceptor role is filled by His49. A divalent metal cation is bound by residues Glu156 and Asp182. Substrate is bound at residue Asp182.

It belongs to the HpcH/HpaI aldolase family. In terms of assembly, homohexamer; trimer of dimers. Co(2+) is required as a cofactor. Requires Mn(2+) as cofactor. Zn(2+) serves as cofactor. It depends on Fe(2+) as a cofactor. The cofactor is Mg(2+).

It catalyses the reaction 4-hydroxy-4-methyl-2-oxoglutarate = 2 pyruvate. It functions in the pathway secondary metabolite biosynthesis. Its function is as follows. 4-hydroxy-4-methyl-2-oxoglutarate aldolase; part of the gene cluster that mediates the biosynthesis of the tetramic acids Sch210971 and Sch210972, potential anti-HIV fungal natural product that contain a decalin core. The PKS module of tasS together with the enoylreductase tasC catalyze the formation of the polyketide unit which is then conjugated to 4-hydroxyl-4-methyl glutamate (HMG) by the condensation domain of the tasS NRPS module. One unique structural feature of Sch210971 and Sch210972 is the tetramic acid motif proposed to be derived from the non-proteinogenic amino acid HMG, by a Dieckmann-type condensation catalyzed by the reductase domain of tasS. The aldolase tasA catalyzes the aldol condensation of 2 molecules of pyruvic acid to yield the intermediate 4-hydroxyl-4-methyl-2-oxoglutarate (HMOG), which can then be stereoselectively transaminated, may be by tasG, to form HMG. The Diels-Alderase tas3 then uses the Dieckmann product of tasS as substrate and catalyzes the Diels-Alder cycloaddition to form the decalin ring of Sch210971 and Sch210972. The protein is 4-hydroxy-4-methyl-2-oxoglutarate aldolase tasA of Hapsidospora irregularis.